The sequence spans 182 residues: MPLLNTITTPYAEAFLQVAESRKEVDQVVDQAKAVLALWNDCPELSGAMASPVLEVEAKKAALQKLFANQVTPSFLNLLKLLADRQRIGVLDAVLERLIELYREQRNIALATVTSAAELSEQQQAALQKKVQAVANTDKLEINLKIDPDLIGGFVVNVGSKVIDASVAGQVRRLGLALAKVS.

The protein belongs to the ATPase delta chain family. F-type ATPases have 2 components, F(1) - the catalytic core - and F(0) - the membrane proton channel. F(1) has five subunits: alpha(3), beta(3), gamma(1), delta(1), epsilon(1). CF(0) has four main subunits: a(1), b(1), b'(1) and c(10-14). The alpha and beta chains form an alternating ring which encloses part of the gamma chain. F(1) is attached to F(0) by a central stalk formed by the gamma and epsilon chains, while a peripheral stalk is formed by the delta, b and b' chains.

The protein resides in the cellular thylakoid membrane. Functionally, f(1)F(0) ATP synthase produces ATP from ADP in the presence of a proton or sodium gradient. F-type ATPases consist of two structural domains, F(1) containing the extramembraneous catalytic core and F(0) containing the membrane proton channel, linked together by a central stalk and a peripheral stalk. During catalysis, ATP synthesis in the catalytic domain of F(1) is coupled via a rotary mechanism of the central stalk subunits to proton translocation. Its function is as follows. This protein is part of the stalk that links CF(0) to CF(1). It either transmits conformational changes from CF(0) to CF(1) or is implicated in proton conduction. The sequence is that of ATP synthase subunit delta from Prochlorococcus marinus (strain MIT 9303).